The chain runs to 196 residues: Homeobox protein XENK-2 (196 aa).

The interval 48–72 is disordered; sequence PSADESPDNDKELSSNPDSGKKRKR. A DNA-binding region (homeobox) is located at residues 69–128; the sequence is KRKRRVLFSKAQTYELERRFRQQRYLSAPEREHLASLIRLTPTQVKIWFQNHRYKMKRAR.

This sequence belongs to the NK-2 homeobox family. Forebrain and midbrain.

The protein resides in the nucleus. Functionally, defines dorsal-ventral domains in developing brain. May play a role in defining positional information along the anterior-posterior (a/p) axis and the dorsal-ventral (d/v) axis of the developing nervous system. May be involved in determining positional or boundary information rather than determining a given cell type. The polypeptide is Homeobox protein XENK-2 (Xenopus laevis (African clawed frog)).